Consider the following 110-residue polypeptide: MSCQQSQQQCQPPPKCTPKCPPKCPTPKCPPKCPPKCPPVSSCCSVSSGGCCGSSSGGGCSSGGGGCCLSHHRRHRSHRHRLQSSGCCSQPSGGSSCCGGDSGQHSGGCC.

Positions Met-1 to Cys-10 are enriched in low complexity. 2 disordered regions span residues Met-1–Lys-23 and Gln-83–Cys-110. Pro residues predominate over residues Gln-11–Lys-23. Positions Gln-83 to Ser-95 are enriched in low complexity. The span at Ser-96 to Cys-110 shows a compositional bias: gly residues.

Belongs to the LCE family. As to quaternary structure, interacts with CYSRT1. In terms of tissue distribution, skin-specific. Expression was readily detected in adult trunk skin, adult arm skin, fetal skin, penal skin, vulva, esophagus and tongue. Not expressed in the cervix, rectum, lung, colon, or placenta.

Precursors of the cornified envelope of the stratum corneum. In Homo sapiens (Human), this protein is Late cornified envelope protein 1A (LCE1A).